Reading from the N-terminus, the 95-residue chain is Aspartyl/glutamyl-tRNA(Asn/Gln) amidotransferase subunit C (95 aa).

The protein belongs to the GatC family. In terms of assembly, heterotrimer of A, B and C subunits.

It catalyses the reaction L-glutamyl-tRNA(Gln) + L-glutamine + ATP + H2O = L-glutaminyl-tRNA(Gln) + L-glutamate + ADP + phosphate + H(+). The enzyme catalyses L-aspartyl-tRNA(Asn) + L-glutamine + ATP + H2O = L-asparaginyl-tRNA(Asn) + L-glutamate + ADP + phosphate + 2 H(+). Allows the formation of correctly charged Asn-tRNA(Asn) or Gln-tRNA(Gln) through the transamidation of misacylated Asp-tRNA(Asn) or Glu-tRNA(Gln) in organisms which lack either or both of asparaginyl-tRNA or glutaminyl-tRNA synthetases. The reaction takes place in the presence of glutamine and ATP through an activated phospho-Asp-tRNA(Asn) or phospho-Glu-tRNA(Gln). In Prosthecochloris aestuarii (strain DSM 271 / SK 413), this protein is Aspartyl/glutamyl-tRNA(Asn/Gln) amidotransferase subunit C.